A 657-amino-acid polypeptide reads, in one-letter code: Pentatricopeptide repeat-containing protein At2g37310 (657 aa).

PPR repeat units follow at residues 21-55 (DGGAYGHLIQHFTRHRLPLHVLQLHARIVVFSIKP), 56-86 (DNFLASKLISFYTRQDRFRQALHVFDEITVR), 87-121 (NAFSYNALLIAYTSREMYFDAFSLFLSWIGSSCYS), 128-165 (DSISISCVLKALSGCDDFWLGSLARQVHGFVIRGGFDS), 166-196 (DVFVGNGMITYYTKCDNIESARKVFDEMSER), 197-232 (DVVSWNSMISGYSQSGSFEDCKKMYKAMLACSDFKP), 233-267 (NGVTVISVFQACGQSSDLIFGLEVHKKMIENHIQM), 268-298 (DLSLCNAVIGFYAKCGSLDYARALFDEMSEK), 299-333 (DSVTYGAIISGYMAHGLVKEAMALFSEMESIGLST), 334-364 (WNAMISGLMQNNHHEEVINSFREMIRCGSRP), 365-399 (NTVTLSSLLPSLTYSSNLKGGKEIHAFAIRNGADN), 400-430 (NIYVTTSIIDNYAKLGFLLGAQRVFDNCKDR), 431-465 (SLIAWTAIITAYAVHGDSDSACSLFDQMQCLGTKP), 466-501 (DDVTLTAVLSAFAHSGDSDMAQHIFDSMLTKYDIEP), and 502-536 (GVEHYACMVSVLSRAGKLSDAMEFISKMPIDPIAK). Residues 537 to 612 (VWGALLNGAS…IPGTSWIETE (76 aa)) form a type E motif region. The interval 613 to 643 (KGLRSFIAKDSSCERSKEMYEIIEGLVESMS) is type E(+) motif.

This sequence belongs to the PPR family. PCMP-E subfamily.

This Arabidopsis thaliana (Mouse-ear cress) protein is Pentatricopeptide repeat-containing protein At2g37310 (PCMP-E49).